The following is a 530-amino-acid chain: Autoinducer-2 kinase (530 aa).

It belongs to the FGGY kinase family.

It is found in the cytoplasm. It carries out the reaction (S)-4,5-dihydroxypentane-2,3-dione + ATP = (2S)-2-hydroxy-3,4-dioxopentyl phosphate + ADP + H(+). Functionally, catalyzes the phosphorylation of autoinducer-2 (AI-2) to phospho-AI-2, which subsequently inactivates the transcriptional regulator LsrR and leads to the transcription of the lsr operon. Phosphorylates the ring-open form of (S)-4,5-dihydroxypentane-2,3-dione (DPD), which is the precursor to all AI-2 signaling molecules, at the C5 position. The chain is Autoinducer-2 kinase from Salmonella typhimurium (strain LT2 / SGSC1412 / ATCC 700720).